The chain runs to 528 residues: Na(+)/H(+) antiporter NhaB (528 aa).

11 helical membrane-spanning segments follow: residues 23–43 (VAII…DPFV), 45–65 (GWLL…CYPL), 90–110 (LVAN…IYFM), 136–156 (CFAA…AVVI), 204–224 (LLMH…VGEP), 242–262 (IRMA…CAIV), 305–325 (GLIA…VGLI), 350–370 (EEAL…AVII), 392–412 (LALF…VFVG), 450–470 (ATPN…APLI), and 479–499 (IMAL…IMFF).

The protein belongs to the NhaB Na(+)/H(+) (TC 2.A.34) antiporter family.

The protein resides in the cell inner membrane. The enzyme catalyses 2 Na(+)(in) + 3 H(+)(out) = 2 Na(+)(out) + 3 H(+)(in). Functionally, na(+)/H(+) antiporter that extrudes sodium in exchange for external protons. This is Na(+)/H(+) antiporter NhaB from Vibrio campbellii (strain ATCC BAA-1116).